A 173-amino-acid chain; its full sequence is Alpha-crystallin A chain (173 aa).

Met1 carries the post-translational modification N-acetylmethionine. The segment at 1-63 (MDVTIQHPWF…RTVLDSGISE (63 aa)) is required for complex formation with BFSP1 and BFSP2; during homooligomerization, mediates the association of 2 dimers to form a tetramer. Deamidated glutamine; partial is present on Gln6. Ser45 is subject to Phosphoserine. Deamidated glutamine; partial is present on Gln50. In terms of domain architecture, sHSP spans 52–164 (LFRTVLDSGI…AERAIPVSRE (113 aa)). Lys70 is subject to N6-acetyllysine. Gln90 is modified (deamidated glutamine; partial). At Lys99 the chain carries N6-acetyllysine. His100 provides a ligand contact to Zn(2+). Asn101 bears the Deamidated asparagine; partial mark. Positions 102 and 107 each coordinate Zn(2+). Ser122 carries the post-translational modification Phosphoserine. Position 123 is a deamidated asparagine; partial (Asn123). Cys131 and Cys142 form a disulfide bridge. Gln147 is subject to Deamidated glutamine; partial. His154 contributes to the Zn(2+) binding site. O-linked (GlcNAc) serine glycosylation occurs at Ser162.

This sequence belongs to the small heat shock protein (HSP20) family. Heteropolymer composed of three CRYAA and one CRYAB subunits. Inter-subunit bridging via zinc ions enhances stability, which is crucial as there is no protein turn over in the lens. Can also form homodimers and homotetramers (dimers of dimers) which serve as the building blocks of homooligomers. Within homooligomers, the zinc-binding motif is created from residues of 3 different molecules. His-100 and Glu-102 from one molecule are ligands of the zinc ion, and His-107 and His-154 residues from additional molecules complete the site with tetrahedral coordination geometry. Part of a complex required for lens intermediate filament formation composed of BFSP1, BFSP2 and CRYAA. O-glycosylated; contains N-acetylglucosamine side chains. Post-translationally, deamidation of Asn-101 in lens occurs mostly during the first 30 years of age, followed by a small additional amount of deamidation (approximately 5%) during the next approximately 38 years, resulting in a maximum of approximately 50% deamidation during the lifetime of the individual. In terms of processing, phosphorylation on Ser-122 seems to be developmentally regulated. Absent in the first months of life, it appears during the first 12 years of human lifetime. The relative amount of phosphorylated form versus unphosphorylated form does not change over the lifetime of the individual. Acetylation at Lys-70 may increase chaperone activity. Post-translationally, undergoes age-dependent proteolytical cleavage at the C-terminus. Alpha-crystallin A(1-172) is the most predominant form produced most rapidly during the first 12 years of age and after this age is present in approximately 50% of the lens molecules. In terms of processing, in young individuals and during the first approximately 30 years of life, less than half molecules contain an intramolecular disulfide bond (oxidized form), while in the remaining fraction the cysteines are in the free sulfhydryl form (reduced form). With aging, the amount of oxidized form increases up to 90% and it becomes a major constituent of high molecular weight aggregates, concomitant with an age-dependent loss of its chaperone activity. The reduced form is undetectable in cataractous lenses. Expressed in the eye lens (at protein level).

It localises to the cytoplasm. It is found in the nucleus. Its function is as follows. Contributes to the transparency and refractive index of the lens. In its oxidized form (absence of intramolecular disulfide bond), acts as a chaperone, preventing aggregation of various proteins under a wide range of stress conditions. Required for the correct formation of lens intermediate filaments as part of a complex composed of BFSP1, BFSP2 and CRYAA. This chain is Alpha-crystallin A chain (CRYAA), found in Homo sapiens (Human).